A 433-amino-acid polypeptide reads, in one-letter code: Monodehydroascorbate reductase (433 aa).

FAD contacts are provided by residues 12–15 (GGVS), glutamate 39, arginine 46, lysine 51, isoleucine 94, and 145–146 (RE). NAD(+) contacts are provided by residues 170–176 (GGYIGLE), glutamate 194, arginine 200, and glycine 259. 172 to 176 (YIGLE) lines the NADP(+) pocket. NADP(+)-binding residues include arginine 200 and glycine 259. Aspartate 296 is a binding site for FAD. 312–313 (EH) lines the NAD(+) pocket. An NADP(+)-binding site is contributed by 312 to 313 (EH). Residue valine 314 participates in FAD binding. Residue arginine 318 participates in L-ascorbate binding. Tyrosine 347 is a binding site for FAD. Tyrosine 347 contributes to the NAD(+) binding site. An NADP(+)-binding site is contributed by tyrosine 347. Arginine 349 lines the L-ascorbate pocket.

It belongs to the FAD-dependent oxidoreductase family. The cofactor is FAD. As to expression, expressed at relatively low levels in all tissues examined.

It is found in the cytoplasm. It catalyses the reaction 2 monodehydro-L-ascorbate radical + NADH + H(+) = 2 L-ascorbate + NAD(+). Functionally, catalyzes the conversion of monodehydroascorbate to ascorbate, oxidizing NADH in the process. This Pisum sativum (Garden pea) protein is Monodehydroascorbate reductase.